Here is a 656-residue protein sequence, read N- to C-terminus: 1-deoxy-D-xylulose-5-phosphate synthase 1 (656 aa).

Thiamine diphosphate contacts are provided by residues His73 and 113–115 (SHA). Asp144 provides a ligand contact to Mg(2+). Thiamine diphosphate-binding positions include 145–146 (GA), Asn174, Tyr285, and Glu367. Residue Asn174 participates in Mg(2+) binding. Residues 625–656 (AGDRAGGPAVEQPGDGRMSGDGRIVMPAQGEN) are disordered.

It belongs to the transketolase family. DXPS subfamily. Homodimer. Mg(2+) serves as cofactor. Requires thiamine diphosphate as cofactor.

It carries out the reaction D-glyceraldehyde 3-phosphate + pyruvate + H(+) = 1-deoxy-D-xylulose 5-phosphate + CO2. It functions in the pathway metabolic intermediate biosynthesis; 1-deoxy-D-xylulose 5-phosphate biosynthesis; 1-deoxy-D-xylulose 5-phosphate from D-glyceraldehyde 3-phosphate and pyruvate: step 1/1. Its function is as follows. Catalyzes the acyloin condensation reaction between C atoms 2 and 3 of pyruvate and glyceraldehyde 3-phosphate to yield 1-deoxy-D-xylulose-5-phosphate (DXP). This Streptomyces coelicolor (strain ATCC BAA-471 / A3(2) / M145) protein is 1-deoxy-D-xylulose-5-phosphate synthase 1.